We begin with the raw amino-acid sequence, 465 residues long: MFRQEQPLAEGSFAPMGSLQPEAGNASWNGTEAPGGGARATPYSLQVTLTLVCLAGLLMLFTVFGNVLVIIAVFTSRALKAPQNLFLVSLASADILVATLVIPFSLANEVMGYWYFGKAWCEIYLALDVLFCTSSIVHLCAISLDRYWSITQAIEYNLKRTPRRIKAIIVTVWVISAVISFPPLISIEKKAGGGGQQPAEPRCEINDQKWYVISSCIGSFFAPCLIMILVYVRIYQIAKRRTRVPPSRRGPDAAAALPGGAERRPNGLGPERGVGRVGAEAEPLPVQLNGAPGEPAPAGPRDADGLDLEESSSSEHAERPPGPRRSERGPRAKSKARASQVKPGDSLPRRGPGAPGPGAPATGAGEERGGVAKASRWRGRQNREKRFTFVLAVVIGVFVVCWFPFFFTYTLTAVGCSVPPTLFKFFFWFGYCNSSLNPVIYTIFNHDFRRAFKKILCRGDRKRIV.

The Extracellular segment spans residues 1–48 (MFRQEQPLAEGSFAPMGSLQPEAGNASWNGTEAPGGGARATPYSLQVT). 2 N-linked (GlcNAc...) asparagine glycosylation sites follow: Asn25 and Asn29. A helical membrane pass occupies residues 49 to 74 (LTLVCLAGLLMLFTVFGNVLVIIAVF). Residues 75 to 85 (TSRALKAPQNL) lie on the Cytoplasmic side of the membrane. The helical transmembrane segment at 86–111 (FLVSLASADILVATLVIPFSLANEVM) threads the bilayer. Over 112-121 (GYWYFGKAWC) the chain is Extracellular. A disulfide bridge connects residues Cys121 and Cys203. Residues 122–144 (EIYLALDVLFCTSSIVHLCAISL) traverse the membrane as a helical segment. At 145 to 164 (DRYWSITQAIEYNLKRTPRR) the chain is on the cytoplasmic side. A helical transmembrane segment spans residues 165–188 (IKAIIVTVWVISAVISFPPLISIE). Residues 189–207 (KKAGGGGQQPAEPRCEIND) are Extracellular-facing. Residues 208 to 232 (QKWYVISSCIGSFFAPCLIMILVYV) form a helical membrane-spanning segment. Topologically, residues 233–389 (RIYQIAKRRT…RQNREKRFTF (157 aa)) are cytoplasmic. The interval 242–377 (TRVPPSRRGP…RGGVAKASRW (136 aa)) is disordered. The segment covering 313–330 (SSEHAERPPGPRRSERGP) has biased composition (basic and acidic residues). Ser346 bears the Phosphoserine mark. An Omega-N-methylarginine modification is found at Arg368. The chain crosses the membrane as a helical span at residues 390–414 (VLAVVIGVFVVCWFPFFFTYTLTAV). Topologically, residues 415 to 424 (GCSVPPTLFK) are extracellular. The helical transmembrane segment at 425-445 (FFFWFGYCNSSLNPVIYTIFN) threads the bilayer. Residues 446–465 (HDFRRAFKKILCRGDRKRIV) lie on the Cytoplasmic side of the membrane. The S-palmitoyl cysteine moiety is linked to residue Cys457.

This sequence belongs to the G-protein coupled receptor 1 family. Adrenergic receptor subfamily. ADRA2A sub-subfamily.

The protein resides in the cell membrane. Functionally, alpha-2 adrenergic receptors mediate the catecholamine-induced inhibition of adenylate cyclase through the action of G proteins. The chain is Alpha-2A adrenergic receptor from Sus scrofa (Pig).